A 210-amino-acid chain; its full sequence is Large ribosomal subunit protein uL3 (210 aa).

Belongs to the universal ribosomal protein uL3 family. As to quaternary structure, part of the 50S ribosomal subunit. Forms a cluster with proteins L14 and L19.

One of the primary rRNA binding proteins, it binds directly near the 3'-end of the 23S rRNA, where it nucleates assembly of the 50S subunit. This is Large ribosomal subunit protein uL3 from Caldicellulosiruptor bescii (strain ATCC BAA-1888 / DSM 6725 / KCTC 15123 / Z-1320) (Anaerocellum thermophilum).